A 393-amino-acid chain; its full sequence is Acetate kinase (393 aa).

Asn8 is a Mg(2+) binding site. Lys15 is a binding site for ATP. Position 91 (Arg91) interacts with substrate. Asp148 (proton donor/acceptor) is an active-site residue. Residues 206–210, 280–282, and 325–329 contribute to the ATP site; these read HLGSG, DMR, and GVGEN. Residue Glu376 coordinates Mg(2+).

This sequence belongs to the acetokinase family. Homodimer. Mg(2+) serves as cofactor. The cofactor is Mn(2+).

The protein localises to the cytoplasm. The catalysed reaction is acetate + ATP = acetyl phosphate + ADP. The protein operates within metabolic intermediate biosynthesis; acetyl-CoA biosynthesis; acetyl-CoA from acetate: step 1/2. In terms of biological role, catalyzes the formation of acetyl phosphate from acetate and ATP. Can also catalyze the reverse reaction. The chain is Acetate kinase from Rhizobium meliloti (Ensifer meliloti).